The sequence spans 212 residues: Large ribosomal subunit protein bL25 (212 aa).

Residues 181–212 are disordered; the sequence is LSEPKEEVIEEDVEEVSADVPTVSETEEEDAE. The span at 188 to 197 shows a compositional bias: acidic residues; it reads VIEEDVEEVS.

Belongs to the bacterial ribosomal protein bL25 family. CTC subfamily. As to quaternary structure, part of the 50S ribosomal subunit; part of the 5S rRNA/L5/L18/L25 subcomplex. Contacts the 5S rRNA. Binds to the 5S rRNA independently of L5 and L18.

Its function is as follows. This is one of the proteins that binds to the 5S RNA in the ribosome where it forms part of the central protuberance. The protein is Large ribosomal subunit protein bL25 of Finegoldia magna (strain ATCC 29328 / DSM 20472 / WAL 2508) (Peptostreptococcus magnus).